Consider the following 361-residue polypeptide: Lipoyl synthase 1, chloroplastic (361 aa).

Cys-87, Cys-92, Cys-98, Cys-124, Cys-128, Cys-131, and Ser-339 together coordinate [4Fe-4S] cluster. One can recognise a Radical SAM core domain in the interval 107–328; the sequence is GEGDGIATAT…KEYGESVGFR (222 aa).

Belongs to the radical SAM superfamily. Lipoyl synthase family. Requires [4Fe-4S] cluster as cofactor.

It localises to the plastid. The protein resides in the chloroplast. The catalysed reaction is [[Fe-S] cluster scaffold protein carrying a second [4Fe-4S](2+) cluster] + N(6)-octanoyl-L-lysyl-[protein] + 2 oxidized [2Fe-2S]-[ferredoxin] + 2 S-adenosyl-L-methionine + 4 H(+) = [[Fe-S] cluster scaffold protein] + N(6)-[(R)-dihydrolipoyl]-L-lysyl-[protein] + 4 Fe(3+) + 2 hydrogen sulfide + 2 5'-deoxyadenosine + 2 L-methionine + 2 reduced [2Fe-2S]-[ferredoxin]. It participates in protein modification; protein lipoylation via endogenous pathway; protein N(6)-(lipoyl)lysine from octanoyl-[acyl-carrier-protein]: step 2/2. Catalyzes the radical-mediated insertion of two sulfur atoms into the C-6 and C-8 positions of the octanoyl moiety bound to the lipoyl domains of lipoate-dependent enzymes, thereby converting the octanoylated domains into lipoylated derivatives. This is Lipoyl synthase 1, chloroplastic from Zea mays (Maize).